We begin with the raw amino-acid sequence, 206 residues long: Probable metallo-hydrolase MJ0888 (206 aa).

Residues histidine 55, histidine 57, aspartate 59, histidine 60, histidine 130, aspartate 147, and histidine 190 each contribute to the Zn(2+) site.

It belongs to the metallo-beta-lactamase superfamily. Zn(2+) serves as cofactor.

The chain is Probable metallo-hydrolase MJ0888 from Methanocaldococcus jannaschii (strain ATCC 43067 / DSM 2661 / JAL-1 / JCM 10045 / NBRC 100440) (Methanococcus jannaschii).